A 50-amino-acid chain; its full sequence is U-megalopygitoxin(9)-Mo13 (50 aa).

The first 23 residues, 1–23, serve as a signal peptide directing secretion; that stretch reads MKLVFLFFIVAVMVSLFVGMTEA. Cysteines 33 and 40 form a disulfide.

It belongs to the caterpillar 9 family. In terms of tissue distribution, expressed by the venom apparatus.

The protein resides in the secreted. In terms of biological role, probable toxin. This chain is U-megalopygitoxin(9)-Mo13, found in Megalopyge opercularis (Southern flannel moth).